A 358-amino-acid chain; its full sequence is Histidinol-phosphate aminotransferase (358 aa).

An N6-(pyridoxal phosphate)lysine modification is found at Lys-210.

Belongs to the class-II pyridoxal-phosphate-dependent aminotransferase family. Histidinol-phosphate aminotransferase subfamily. As to quaternary structure, homodimer. Pyridoxal 5'-phosphate serves as cofactor.

The enzyme catalyses L-histidinol phosphate + 2-oxoglutarate = 3-(imidazol-4-yl)-2-oxopropyl phosphate + L-glutamate. It participates in amino-acid biosynthesis; L-histidine biosynthesis; L-histidine from 5-phospho-alpha-D-ribose 1-diphosphate: step 7/9. This chain is Histidinol-phosphate aminotransferase, found in Clostridium beijerinckii (strain ATCC 51743 / NCIMB 8052) (Clostridium acetobutylicum).